A 45-amino-acid chain; its full sequence is Ice-structuring protein SS-8 (45 aa).

Residue Met1 is modified to Blocked amino end (Met). 3 consecutive repeats follow at residues 9–21, 22–33, and 34–45; these read KAARLAAAAALAA, KTAADAAAKAAA, and KAAAIAAAAASA.

This sequence belongs to the type-I AFP family.

Functionally, antifreeze proteins lower the blood freezing point. In Myoxocephalus scorpius (Shorthorn sculpin), this protein is Ice-structuring protein SS-8.